We begin with the raw amino-acid sequence, 340 residues long: Uroporphyrinogen decarboxylase (340 aa).

Substrate is bound by residues 21–25 (RQAGR), phenylalanine 40, aspartate 71, tyrosine 146, serine 201, and histidine 316.

The protein belongs to the uroporphyrinogen decarboxylase family. In terms of assembly, homodimer.

The protein localises to the cytoplasm. It carries out the reaction uroporphyrinogen III + 4 H(+) = coproporphyrinogen III + 4 CO2. It functions in the pathway porphyrin-containing compound metabolism; protoporphyrin-IX biosynthesis; coproporphyrinogen-III from 5-aminolevulinate: step 4/4. In terms of biological role, catalyzes the decarboxylation of four acetate groups of uroporphyrinogen-III to yield coproporphyrinogen-III. The polypeptide is Uroporphyrinogen decarboxylase (Rickettsia bellii (strain RML369-C)).